The primary structure comprises 870 residues: Adhesin AWP1 (870 aa).

The N-terminal stretch at 1-18 (MSLITIFAFFIKATLVLS) is a signal peptide. Residue asparagine 224 is glycosylated (N-linked (GlcNAc...) asparagine). Cysteine 284 and cysteine 322 are oxidised to a cystine. The tract at residues 329–835 (ITPSSSVEPS…TRQTSVIAPG (507 aa)) is disordered. Low complexity predominate over residues 331-566 (PSSSVEPSSS…SSSAVVPTSS (236 aa)). Gly residues predominate over residues 567–576 (AGGGNGGDNG). The span at 577-641 (QPGADGQPGA…PGAAGQPGAA (65 aa)) shows a compositional bias: low complexity. The span at 642 to 652 (GQPGAGSGGGS) shows a compositional bias: gly residues. Asparagine 669 carries an N-linked (GlcNAc...) asparagine glycan. Positions 675-721 (SGTGNGQAGSGQAGSGQVGSGQAGAGQAGSGQAGAGQAGSGQAGAGQ) are enriched in gly residues. Polar residues-rich tracts occupy residues 724-735 (LDNTASGQSEGG) and 792-801 (GSGTDQSSGR).

Its subcellular location is the secreted. It localises to the cell wall. In terms of biological role, may play a role in cell adhesion. The protein is Adhesin AWP1 of Candida glabrata (strain ATCC 2001 / BCRC 20586 / JCM 3761 / NBRC 0622 / NRRL Y-65 / CBS 138) (Yeast).